Reading from the N-terminus, the 775-residue chain is MEPRPGASTRRPEGRPQREPAPDVWVFPCDRDLPDSSDSEAETEVGGRGDADHHDDDSASEADSTDTELFETGLLGPQGVDGGAVSGGSPPREEDPGSCGGAPPREDGGSDEGDVCAVCTDEIAPHLRCDTFPCMHRFCIPCMKTWMQLRNTCPLCNAKLVYLIVGVTPSGSFSTIPIVNDPQTRMEAEEAVRAGTAVDFIWTGNQRFAPRYLTLGGHTVRALSPTHPEPTTDEDDDDLDDADYVPPAPRRTPRAPPRRGAAAPPVTGGASHAAPQPAAARTAPPSAPIGPHGSSNTNTTTNSSGGGGSRQSRAAAPRGASGPSGGVGVGVGVVEAEAGRPRGRTGPLVNRPAPLANNRDPIVISDSPPASPHRPPAAPMPGSAPRPGPPASAAASGPARPRAAVAPCVRAPPPGPGPRAPAPGAEPAARPADARRVPQSHSSLAQAANQEQSLCRARATVARGSGGPGVEGGHGPSRGAAPSGAAPLPSAASVEQEAAVRPRKRRGSGQENPSPQSTRPPLAPAGAKRAATHPPSDSGPGGRGQGGPGTPLTSSAASASSSSASSSSAPTPAGAASSAAGAASSSASASSGGAVGALGGRQEETSLGPRAASGPRGPRKCARKTRHAETSGAVPAGGLTRYLPISGVSSVVALSPYVNKTITGDCLPILDMETGNIGAYVVLVDQTGNMATRLRAAVPGWSRRTLLPETAGNHVMPPEYPTAPASEWNSLWMTPVGNMLFDQGTLVGALDFRSLRSRHPWSGEQGASTRDEGKQ.

The tract at residues 1 to 112 (MEPRPGASTR…PPREDGGSDE (112 aa)) is disordered. Composition is skewed to basic and acidic residues over residues 10 to 21 (RRPEGRPQREPA) and 45 to 57 (VGGR…HDDD). Acidic residues predominate over residues 58–69 (SASEADSTDTEL). The residue at position 67 (Thr-67) is a Phosphothreonine; by host; by CK1. The segment at 116–157 (CAVCTDEIAPHLRCDTFPCMHRFCIPCMKTWMQLRNTCPLCN) adopts an RING-type zinc-finger fold. The segment at 221 to 636 (RALSPTHPEP…HAETSGAVPA (416 aa)) is disordered. A compositionally biased stretch (acidic residues) spans 231-243 (TTDEDDDDLDDAD). Low complexity predominate over residues 258–284 (RRGAAAPPVTGGASHAAPQPAAARTAP). The segment covering 293-302 (GSSNTNTTTN) has biased composition (polar residues). Residues 310–321 (RQSRAAAPRGAS) are compositionally biased toward low complexity. Positions 322-331 (GPSGGVGVGV) are enriched in gly residues. Pro residues predominate over residues 369-390 (PASPHRPPAAPMPGSAPRPGPP). Residues 391–409 (ASAAASGPARPRAAVAPCV) are compositionally biased toward low complexity. Residues 410–421 (RAPPPGPGPRAP) are compositionally biased toward pro residues. Residues 422–431 (APGAEPAARP) show a composition bias toward low complexity. Positions 439-453 (QSHSSLAQAANQEQS) are enriched in polar residues. Residues 464–476 (GSGGPGVEGGHGP) are compositionally biased toward gly residues. Positions 477–493 (SRGAAPSGAAPLPSAAS) are enriched in low complexity. Residues 509-519 (GQENPSPQSTR) show a composition bias toward polar residues. Residues 539–549 (GPGGRGQGGPG) show a composition bias toward gly residues. Positions 550–592 (TPLTSSAASASSSSASSSSAPTPAGAASSAAGAASSSASASSG) are enriched in low complexity. The span at 617 to 626 (GPRKCARKTR) shows a compositional bias: basic residues.

Belongs to the simplexviruses ICp0 family. As to quaternary structure, interacts directly with human RCOR1/CoREST protein, leading to the disruption of the human BHC corepressor complex. Interacts with human CENPA, leading to its degradation. Interacts with human USP7; this interaction modulates ICP0 stability. Interacts with human CDC34. Interacts (when phosphorylated) with human RNF8 (via FHA domain). Interacts with human TRIM27. Interacts with human ZBP1. Interacts with host MORC3; this interaction promotes the degradation of host MORC3. Post-translationally, phosphorylated at Thr-67, leading to promote interaction with host RNF8. Phosphorylated by host CHEK2; leading to increased SUMO-targeted ubiquitin ligase activity of ICP0. In terms of processing, auto-ubiquitinated. Deubiquitinated by host USP7; leading to stabilize it.

The protein resides in the host cytoplasm. The protein localises to the host nucleus. The catalysed reaction is S-ubiquitinyl-[E2 ubiquitin-conjugating enzyme]-L-cysteine + [acceptor protein]-L-lysine = [E2 ubiquitin-conjugating enzyme]-L-cysteine + N(6)-ubiquitinyl-[acceptor protein]-L-lysine.. In terms of biological role, SUMO-targeted ubiquitin ligase that plays an essential role in nuclear antiviral defense evasion triggered by dsDNA viruses. Acts during the initial stages of lytic infection and the reactivation of latent viral genome. Prevents the antiviral effect of nuclear bodies by degrading host PML, SP100 and MORC3. Prevents antiviral response to viral DNA induced by IFI16 by degrading it. Additionally, inhibits host IRF3 nuclear signaling to prevent interferon production by the infected cells. Interestingly, the E3 ubiquitin ligase activity associated with the RING finger domain does not seem to be directly required to inhibit the activation of IRF3 but instead plays a critical role in modulating the cellular localization of ICP0. Upon reactivation of latent genome, suppresses the silencing of viral DNA by dissociating either HDAC1 or HDAC2 from the HDAC-RCOR1-REST-KDM1A complex localized at the ND10 structures and causes their dispersal. Two cellular histone ubiquitin ligases RNF8 and RNF168 are also targeted by ICP0 for degradation, leading to a loss of ubiquitinated forms of H2A, a relief of transcriptional repression, and the activation of latent viral genomes. Enhances the localization of host CCND3 to ND10 bodies that serve as precursors of replication compartments to enable efficient viral replication. Like many RING-finger E3 ubiquitin ligases, ICP0 can induce its own ubiquitination, an activity that promotes its instability due to its targeting to the 26S proteasome for degradation. ICP0 restricts this process by recruiting the cellular ubiquitin-specific protease USP7 that cleaves the anchored ubiquitin chains from ICP0, thereby promoting its stabilization. This is E3 ubiquitin-protein ligase ICP0 (ICP0) from Homo sapiens (Human).